We begin with the raw amino-acid sequence, 248 residues long: Flavodoxin/ferredoxin--NADP reductase (248 aa).

An FAD-binding FR-type domain is found at 2 to 101; the sequence is ADWVTGKVTK…SEAAGFFVLD (100 aa). Residues 50 to 53, tyrosine 66, 74 to 76, and threonine 116 contribute to the FAD site; these read RAYS and KLS. NADP(+) contacts are provided by residues 143–144, 173–174, arginine 184, 214–216, and aspartate 220; these read AR, SR, and NPQ. 247–248 contributes to the FAD binding site; sequence YW.

This sequence belongs to the ferredoxin--NADP reductase type 1 family. FAD serves as cofactor.

It is found in the cytoplasm. The enzyme catalyses 2 reduced [2Fe-2S]-[ferredoxin] + NADP(+) + H(+) = 2 oxidized [2Fe-2S]-[ferredoxin] + NADPH. The catalysed reaction is reduced [flavodoxin] + NADP(+) = oxidized [flavodoxin] + NADPH + 2 H(+). In terms of biological role, transports electrons between flavodoxin or ferredoxin and NADPH. This Shigella flexneri protein is Flavodoxin/ferredoxin--NADP reductase (fpr).